The chain runs to 158 residues: 2-C-methyl-D-erythritol 2,4-cyclodiphosphate synthase (158 aa).

The a divalent metal cation site is built by Asp-8 and His-10. Residues 8–10 and 34–35 each bind 4-CDP-2-C-methyl-D-erythritol 2-phosphate; these read DVH and HS. Residue His-42 coordinates a divalent metal cation. 4-CDP-2-C-methyl-D-erythritol 2-phosphate is bound by residues 56 to 58, 61 to 65, 100 to 106, 132 to 135, and Phe-139; these read DIG, FPDTD, AQKPKML, and TTEE.

Belongs to the IspF family. In terms of assembly, homotrimer. A divalent metal cation serves as cofactor.

It carries out the reaction 4-CDP-2-C-methyl-D-erythritol 2-phosphate = 2-C-methyl-D-erythritol 2,4-cyclic diphosphate + CMP. It participates in isoprenoid biosynthesis; isopentenyl diphosphate biosynthesis via DXP pathway; isopentenyl diphosphate from 1-deoxy-D-xylulose 5-phosphate: step 4/6. In terms of biological role, involved in the biosynthesis of isopentenyl diphosphate (IPP) and dimethylallyl diphosphate (DMAPP), two major building blocks of isoprenoid compounds. Catalyzes the conversion of 4-diphosphocytidyl-2-C-methyl-D-erythritol 2-phosphate (CDP-ME2P) to 2-C-methyl-D-erythritol 2,4-cyclodiphosphate (ME-CPP) with a corresponding release of cytidine 5-monophosphate (CMP). The polypeptide is 2-C-methyl-D-erythritol 2,4-cyclodiphosphate synthase (Clostridium beijerinckii (strain ATCC 51743 / NCIMB 8052) (Clostridium acetobutylicum)).